Here is a 470-residue protein sequence, read N- to C-terminus: Putative multidrug resistance protein MdtD (470 aa).

Residues 1 to 11 (MTELPDNTRWQ) are Periplasmic-facing. The chain crosses the membrane as a helical span at residues 12–32 (LWIVAFGFFMQSLDTTIVNTA). At 33–48 (LPSMAKSLGESPLHMH) the chain is on the cytoplasmic side. A helical transmembrane segment spans residues 49 to 69 (MVVVSYVLTVAVMLPASGWLA). Over 70-76 (DKIGVRN) the chain is Periplasmic. A helical transmembrane segment spans residues 77–97 (IFFAAIVLFTLGSLFCALSGT). At 98–101 (LNQL) the chain is on the cytoplasmic side. A helical transmembrane segment spans residues 102–124 (VLARVLQGVGGAMMVPVGRLTVM). Topologically, residues 125 to 137 (KIVPRTQYMAAMT) are periplasmic. Residues 138-158 (FVTLPGQIGPLLGPALGGVLV) traverse the membrane as a helical segment. Over 159 to 164 (EYASWH) the chain is Cytoplasmic. The chain crosses the membrane as a helical span at residues 165–185 (WIFLINIPVGIVGAMATFMLM). The Periplasmic portion of the chain corresponds to 186 to 196 (PNYTIETRRFD). Residues 197 to 217 (LPGFLLLAIGMAVLTLALDGS) form a helical membrane-spanning segment. Topologically, residues 218–224 (KSMGISP) are cytoplasmic. Residues 225 to 245 (WTLAGLAAGGAAAILLYLFHA) traverse the membrane as a helical segment. The Periplasmic segment spans residues 246–262 (KKNSGALFSLRLFRTPT). A helical transmembrane segment spans residues 263 to 283 (FSLGLLGSFAGRIGSGMLPFM). The Cytoplasmic portion of the chain corresponds to 284–285 (TP). A helical transmembrane segment spans residues 286–306 (VFLQIGLGFSPFHAGLMMIPM). At 307–341 (VLGSMGMKRIVVQIVNRFGYRRVLVATTLGLALVS) the chain is on the periplasmic side. A helical transmembrane segment spans residues 342 to 362 (LLFMSVALLGWYYLLPLVLLL). Residues 363 to 395 (QGMVNSARFSSMNTLTLKDLPDTLASSGNSLLS) lie on the Cytoplasmic side of the membrane. A helical membrane pass occupies residues 396–416 (MIMQLSMSIGVTIAGMLLGMF). Residues 417–430 (GQQHIGIDSSATHH) lie on the Periplasmic side of the membrane. Residues 431–451 (VFMYTWLCMAVIIALPAIIFA) form a helical membrane-spanning segment. Over 452 to 470 (RVPNDTQQNMVISRRKRSL) the chain is Cytoplasmic.

This sequence belongs to the major facilitator superfamily. TCR/Tet family.

The protein localises to the cell inner membrane. The chain is Putative multidrug resistance protein MdtD from Salmonella dublin (strain CT_02021853).